The sequence spans 566 residues: Multidrug and toxin extrusion protein 1 (566 aa).

Met-1 bears the N-acetylmethionine mark. The next 13 helical transmembrane spans lie at 37 to 57 (LLVL…ISFI), 72 to 92 (AVTL…HGLS), 120 to 140 (LILL…EQIL), 152 to 172 (LTQT…LYTL), 176 to 196 (YLLN…ANLV), 216 to 236 (ALAN…YILW), 257 to 276 (SFLQ…WWAY), 295 to 315 (SITY…SVAA), 336 to 356 (AISL…LLGC), 370 to 390 (IVAL…FEAL), 409 to 429 (IVNA…LMFV), 437 to 457 (LWSG…VFIA), and 543 to 563 (GLLF…RVYI).

Belongs to the multi antimicrobial extrusion (MATE) (TC 2.A.66.1) family. In terms of tissue distribution, highly expressed in kidney and placenta, moderately in stomach, colon, lung, spleen, skeletal muscle and prostate, and slightly in spleen. In the kidney, found in medulla and cortex, especially in the proximal convoluted and straight tubules. No expression was observed in heart, brain, small intestine and liver. Expressed in Sertoli cells in testis.

It is found in the cell membrane. The protein resides in the apical cell membrane. The catalysed reaction is thiamine(out) + H(+)(in) = thiamine(in) + H(+)(out). It carries out the reaction estrone 3-sulfate(in) + H(+)(out) = estrone 3-sulfate(out) + H(+)(in). The enzyme catalyses creatinine(in) + H(+)(out) = creatinine(out) + H(+)(in). It catalyses the reaction agmatine(in) + H(+)(out) = agmatine(out) + H(+)(in). Functionally, multidrug efflux pump that functions as a H(+)/organic cation antiporter. Plays a physiological role in the excretion of cationic compounds including endogenous metabolites, drugs, toxins through the kidney and liver, into urine and bile respectively. Mediates the efflux of endogenous compounds such as creatinine, vitamin B1/thiamine, agmatine and estrone-3-sulfate. May also contribute to regulate the transport of cationic compounds in testis across the blood-testis-barrier. The chain is Multidrug and toxin extrusion protein 1 (Slc47a1) from Rattus norvegicus (Rat).